Here is a 938-residue protein sequence, read N- to C-terminus: Kinesin-like protein KIN-7B (938 aa).

A Kinesin motor domain is found at K29–V348. G113–T120 lines the ATP pocket. Residues V357–K431 are a coiled coil. Positions T450–S481 are disordered. Residues K555–S590 are a coiled coil. Residues C628–Q678 are disordered. Residues S641–S652 show a composition bias toward low complexity. A compositionally biased stretch (basic and acidic residues) spans P658–S669.

Belongs to the TRAFAC class myosin-kinesin ATPase superfamily. Kinesin family. KIN-7 subfamily. Interacts with ANP3. Interacts with TIO/FU. Expressed in roots, stems, flowers, pollen mother cells and embryos.

The protein resides in the cytoplasm. It is found in the cytoskeleton. It localises to the phragmoplast. In terms of biological role, probable plus end-directed motor protein that functions in the NACK-PQR (ANP3-MKK6-MPK4) MAP kinase signaling pathway, which is essential for somatic cell cytokinesis, especially for the cell-plate formation and its expansion. May regulate the activity and the localization of ANP3, probably by association through the non-catalytic region of the kinase. Functionally redundant with NACK1 and essential to promote the progression of cytokinesis and for cellularization (formation of the cell plate) during microgametogenesis and megagametogenesis. The sequence is that of Kinesin-like protein KIN-7B from Arabidopsis thaliana (Mouse-ear cress).